The following is a 1069-amino-acid chain: Enteropeptidase (1069 aa).

The Cytoplasmic portion of the chain corresponds to 1 to 18 (MKSSRDEAVGHHSISSFE). Residues 19 to 47 (VMLSALFIMLMVFSIGLIAVSWLAVKESE) form a helical; Signal-anchor for type II membrane protein membrane-spanning segment. Over 48–1069 (GDAALGKSHE…FIEWIHSFLH (1022 aa)) the chain is Extracellular. Positions 54-169 (KSHEVRGTFK…NSIDITASLS (116 aa)) constitute an SEA domain. Residues Asn-147, Asn-197, and Asn-212 are each glycosylated (N-linked (GlcNAc...) asparagine). Residues 227–268 (IECQPGSRPCAHAWNCVATDLFCDGEVNCPDGSDEDTGLCAT) enclose the LDL-receptor class A 1 domain. Cystine bridges form between Cys-229–Cys-242, Cys-236–Cys-255, Cys-249–Cys-266, and Cys-270–Cys-298. In terms of domain architecture, CUB 1 spans 270–379 (CDGRFLLTGD…IGFNATYSTF (110 aa)). Asn-373, Asn-380, Asn-433, Asn-515, Asn-579, and Asn-675 each carry an N-linked (GlcNAc...) asparagine glycan. The 163-residue stretch at 387–549 (YEKIDCTFDD…ISLTNGICSQ (163 aa)) folds into the MAM domain. Residues Cys-569 and Cys-597 are joined by a disulfide bond. In terms of domain architecture, CUB 2 spans 569 to 679 (CGGPFELWEP…KGFKANFTSG (111 aa)). One can recognise an LDL-receptor class A 2 domain in the interval 686 to 724 (EPCQDDEFQCKDGNCIPLGNLCDSYPHCRDGSDEASCVR). Intrachain disulfides connect Cys-688–Cys-700, Cys-695–Cys-713, and Cys-707–Cys-722. Residues 723–816 (VRFLNGTRSN…LILLQCNHKS (94 aa)) enclose the SRCR domain. Asn-727, Asn-751, Asn-770, and Asn-791 each carry an N-linked (GlcNAc...) asparagine glycan. 6 cysteine pairs are disulfide-bonded: Cys-802/Cys-812, Cys-817/Cys-945, Cys-859/Cys-875, Cys-959/Cys-1027, Cys-991/Cys-1006, and Cys-1017/Cys-1045. Residues 830–1069 (IVGGSDAQAG…FIEWIHSFLH (240 aa)) form the Peptidase S1 domain. The active-site Charge relay system is the His-874. Asn-897 carries N-linked (GlcNAc...) asparagine glycosylation. Asp-925 serves as the catalytic Charge relay system. Asn-936 and Asn-999 each carry an N-linked (GlcNAc...) asparagine glycan. Ser-1021 functions as the Charge relay system in the catalytic mechanism.

It belongs to the peptidase S1 family. As to quaternary structure, heterodimer of a catalytic (light) chain and a multidomain (heavy) chain linked by a disulfide bond. Post-translationally, the chains are derived from a single precursor that is cleaved by a trypsin-like protease.

The protein localises to the membrane. The catalysed reaction is Activation of trypsinogen by selective cleavage of 6-Lys-|-Ile-7 bond.. Responsible for initiating activation of pancreatic proteolytic proenzymes (trypsin, chymotrypsin and carboxypeptidase A). It catalyzes the conversion of trypsinogen to trypsin which in turn activates other proenzymes including chymotrypsinogen, procarboxypeptidases, and proelastases. This Mus musculus (Mouse) protein is Enteropeptidase (Tmprss15).